The primary structure comprises 398 residues: LIM/homeobox protein Lhx3 (398 aa).

LIM zinc-binding domains lie at 28 to 78 (CAGC…CKDD) and 87 to 141 (CAAC…CKAD). A DNA-binding region (homeobox) is located at residues 154-213 (AKRPRTTITAKQLETLKNAYNNSPKPARHVREQLSTETGLDMRVVQVWFQNRRAKEKRLK). Disordered regions lie at residues 208-294 (KEKR…FPLE) and 307-398 (DIQA…HAQF). A compositionally biased stretch (low complexity) spans 272–282 (SSLSESSPALS).

Its subcellular location is the nucleus. Transcription factor. The chain is LIM/homeobox protein Lhx3 (lhx3) from Danio rerio (Zebrafish).